Here is a 184-residue protein sequence, read N- to C-terminus: Photosystem I assembly protein Ycf4 (184 aa).

2 helical membrane-spanning segments follow: residues 22–42 (LCWAFILVLGAIGFSLVGFSS) and 64–84 (IVMCFYGIAGIFLGFYLWCTI).

It belongs to the Ycf4 family.

The protein resides in the plastid. It is found in the chloroplast thylakoid membrane. Functionally, seems to be required for the assembly of the photosystem I complex. This is Photosystem I assembly protein Ycf4 from Angiopteris evecta (Mule's foot fern).